A 380-amino-acid polypeptide reads, in one-letter code: Beta sliding clamp (380 aa).

The protein belongs to the beta sliding clamp family. As to quaternary structure, forms a ring-shaped head-to-tail homodimer around DNA which binds and tethers DNA polymerases and other proteins to the DNA. The DNA replisome complex has a single clamp-loading complex (3 tau and 1 each of delta, delta', psi and chi subunits) which binds 3 Pol III cores (1 core on the leading strand and 2 on the lagging strand) each with a beta sliding clamp dimer. Additional proteins in the replisome are other copies of gamma, psi and chi, Ssb, DNA helicase and RNA primase.

It is found in the cytoplasm. Confers DNA tethering and processivity to DNA polymerases and other proteins. Acts as a clamp, forming a ring around DNA (a reaction catalyzed by the clamp-loading complex) which diffuses in an ATP-independent manner freely and bidirectionally along dsDNA. Initially characterized for its ability to contact the catalytic subunit of DNA polymerase III (Pol III), a complex, multichain enzyme responsible for most of the replicative synthesis in bacteria; Pol III exhibits 3'-5' exonuclease proofreading activity. The beta chain is required for initiation of replication as well as for processivity of DNA replication. The chain is Beta sliding clamp (dnaN) from Mycoplasma pneumoniae (strain ATCC 29342 / M129 / Subtype 1) (Mycoplasmoides pneumoniae).